Reading from the N-terminus, the 119-residue chain is Holo-[acyl-carrier-protein] synthase (119 aa).

The Mg(2+) site is built by Asp-5 and Glu-51.

This sequence belongs to the P-Pant transferase superfamily. AcpS family. The cofactor is Mg(2+).

It is found in the cytoplasm. It carries out the reaction apo-[ACP] + CoA = holo-[ACP] + adenosine 3',5'-bisphosphate + H(+). Its function is as follows. Transfers the 4'-phosphopantetheine moiety from coenzyme A to a Ser of acyl-carrier-protein. The chain is Holo-[acyl-carrier-protein] synthase from Helicobacter pylori (strain HPAG1).